We begin with the raw amino-acid sequence, 77 residues long: Acyl carrier protein (77 aa).

One can recognise a Carrier domain in the interval 1-76 (MENFDKVKDI…DAVKFINSIE (76 aa)). S36 carries the post-translational modification O-(pantetheine 4'-phosphoryl)serine.

The protein belongs to the acyl carrier protein (ACP) family. Post-translationally, 4'-phosphopantetheine is transferred from CoA to a specific serine of apo-ACP by AcpS. This modification is essential for activity because fatty acids are bound in thioester linkage to the sulfhydryl of the prosthetic group.

It is found in the cytoplasm. It functions in the pathway lipid metabolism; fatty acid biosynthesis. Functionally, carrier of the growing fatty acid chain in fatty acid biosynthesis. The sequence is that of Acyl carrier protein from Staphylococcus saprophyticus subsp. saprophyticus (strain ATCC 15305 / DSM 20229 / NCIMB 8711 / NCTC 7292 / S-41).